Here is a 330-residue protein sequence, read N- to C-terminus: Aspartate--ammonia ligase (330 aa).

Belongs to the class-II aminoacyl-tRNA synthetase family. AsnA subfamily.

The protein resides in the cytoplasm. It carries out the reaction L-aspartate + NH4(+) + ATP = L-asparagine + AMP + diphosphate + H(+). The protein operates within amino-acid biosynthesis; L-asparagine biosynthesis; L-asparagine from L-aspartate (ammonia route): step 1/1. This chain is Aspartate--ammonia ligase, found in Aeromonas salmonicida (strain A449).